Consider the following 163-residue polypeptide: Photosystem II extrinsic protein V (163 aa).

The N-terminal stretch at 1–26 (MLRKLILITVATVFFACQLLVNPVSA) is a signal peptide. Heme c contacts are provided by Cys63, Cys66, His67, and His118.

This sequence belongs to the cytochrome c family. PsbV subfamily. PSII is composed of 1 copy each of membrane proteins PsbA, PsbB, PsbC, PsbD, PsbE, PsbF, PsbH, PsbI, PsbJ, PsbK, PsbL, PsbM, PsbT, PsbX, PsbY, PsbZ, Psb30/Ycf12, peripheral proteins PsbO, CyanoQ (PsbQ), PsbU, PsbV and a large number of cofactors. It forms dimeric complexes. Heme c serves as cofactor.

The protein localises to the cellular thylakoid membrane. Functionally, one of the extrinsic, lumenal subunits of photosystem II (PSII). PSII is a light-driven water plastoquinone oxidoreductase, using light energy to abstract electrons from H(2)O, generating a proton gradient subsequently used for ATP formation. The extrinsic proteins stabilize the structure of photosystem II oxygen-evolving complex (OEC), the ion environment of oxygen evolution and protect the OEC against heat-induced inactivation. Low-potential cytochrome c that plays a role in the OEC of PSII. This is Photosystem II extrinsic protein V from Aphanothece halophytica.